The chain runs to 166 residues: Olee1-like protein (166 aa).

Positions 1–23 (MAKSIIIQAPALCFLSLLGFAYS) are cleaved as a signal peptide. 3 cysteine pairs are disulfide-bonded: Cys-35–Cys-106, Cys-38–Cys-150, and Cys-59–Cys-94.

Belongs to the Ole e I family.

The protein localises to the secreted. The protein is Olee1-like protein of Betula pendula (European white birch).